The chain runs to 218 residues: Thiamine-phosphate synthase (218 aa).

4-amino-2-methyl-5-(diphosphooxymethyl)pyrimidine contacts are provided by residues 43–47 (QFRDK) and Asn78. Mg(2+) is bound by residues Asp79 and Asp98. A 4-amino-2-methyl-5-(diphosphooxymethyl)pyrimidine-binding site is contributed by Ser117. 143–145 (TNS) provides a ligand contact to 2-[(2R,5Z)-2-carboxy-4-methylthiazol-5(2H)-ylidene]ethyl phosphate. Lys146 is a binding site for 4-amino-2-methyl-5-(diphosphooxymethyl)pyrimidine. Residues Gly174 and 194 to 195 (IS) contribute to the 2-[(2R,5Z)-2-carboxy-4-methylthiazol-5(2H)-ylidene]ethyl phosphate site.

Belongs to the thiamine-phosphate synthase family. Mg(2+) serves as cofactor.

The catalysed reaction is 2-[(2R,5Z)-2-carboxy-4-methylthiazol-5(2H)-ylidene]ethyl phosphate + 4-amino-2-methyl-5-(diphosphooxymethyl)pyrimidine + 2 H(+) = thiamine phosphate + CO2 + diphosphate. The enzyme catalyses 2-(2-carboxy-4-methylthiazol-5-yl)ethyl phosphate + 4-amino-2-methyl-5-(diphosphooxymethyl)pyrimidine + 2 H(+) = thiamine phosphate + CO2 + diphosphate. It carries out the reaction 4-methyl-5-(2-phosphooxyethyl)-thiazole + 4-amino-2-methyl-5-(diphosphooxymethyl)pyrimidine + H(+) = thiamine phosphate + diphosphate. It functions in the pathway cofactor biosynthesis; thiamine diphosphate biosynthesis; thiamine phosphate from 4-amino-2-methyl-5-diphosphomethylpyrimidine and 4-methyl-5-(2-phosphoethyl)-thiazole: step 1/1. In terms of biological role, condenses 4-methyl-5-(beta-hydroxyethyl)thiazole monophosphate (THZ-P) and 2-methyl-4-amino-5-hydroxymethyl pyrimidine pyrophosphate (HMP-PP) to form thiamine monophosphate (TMP). The sequence is that of Thiamine-phosphate synthase from Lactococcus lactis subsp. cremoris (strain SK11).